Consider the following 501-residue polypeptide: Aspartyl/glutamyl-tRNA(Asn/Gln) amidotransferase subunit B (501 aa).

This sequence belongs to the GatB/GatE family. GatB subfamily. Heterotrimer of A, B and C subunits.

The catalysed reaction is L-glutamyl-tRNA(Gln) + L-glutamine + ATP + H2O = L-glutaminyl-tRNA(Gln) + L-glutamate + ADP + phosphate + H(+). It catalyses the reaction L-aspartyl-tRNA(Asn) + L-glutamine + ATP + H2O = L-asparaginyl-tRNA(Asn) + L-glutamate + ADP + phosphate + 2 H(+). In terms of biological role, allows the formation of correctly charged Asn-tRNA(Asn) or Gln-tRNA(Gln) through the transamidation of misacylated Asp-tRNA(Asn) or Glu-tRNA(Gln) in organisms which lack either or both of asparaginyl-tRNA or glutaminyl-tRNA synthetases. The reaction takes place in the presence of glutamine and ATP through an activated phospho-Asp-tRNA(Asn) or phospho-Glu-tRNA(Gln). This Agrobacterium fabrum (strain C58 / ATCC 33970) (Agrobacterium tumefaciens (strain C58)) protein is Aspartyl/glutamyl-tRNA(Asn/Gln) amidotransferase subunit B.